A 229-amino-acid chain; its full sequence is Potassium/proton antiporter CemA (229 aa).

A run of 3 helical transmembrane segments spans residues 7–27, 106–126, and 189–209; these read LTPL…SLSF, IILH…FFIM, and IISG…KYWI.

Belongs to the CemA family.

Its subcellular location is the plastid. The protein localises to the chloroplast inner membrane. It catalyses the reaction K(+)(in) + H(+)(out) = K(+)(out) + H(+)(in). In terms of biological role, contributes to K(+)/H(+) antiport activity by supporting proton efflux to control proton extrusion and homeostasis in chloroplasts in a light-dependent manner to modulate photosynthesis. Prevents excessive induction of non-photochemical quenching (NPQ) under continuous-light conditions. Indirectly promotes efficient inorganic carbon uptake into chloroplasts. The protein is Potassium/proton antiporter CemA of Ceratophyllum demersum (Rigid hornwort).